The chain runs to 729 residues: Transcriptional activator ptaB (729 aa).

Residues 1–12 (MPQHPGLPPGHP) are compositionally biased toward pro residues. Disordered regions lie at residues 1-69 (MPQH…QAHA), 207-341 (AAAA…QNQA), 505-538 (LELS…SLPE), and 614-729 (RGPQ…KGTA). Over residues 38–56 (PGGPQVTQGGPMMGMPPGA) the composition is skewed to low complexity. A compositionally biased stretch (pro residues) spans 272–285 (APQPHPTPNPPPQQ). Low complexity-rich tracts occupy residues 286–300 (LPQA…HQQP) and 307–341 (QPQQ…QNQA). Residues 614 to 625 (RGPQMNGPNQFA) are compositionally biased toward polar residues. The span at 655-671 (GPPGMVQQGQMQPNVGQ) shows a compositional bias: low complexity. Polar residues predominate over residues 672–682 (ATSASASPQVT).

This sequence belongs to the MFG1 family. As to quaternary structure, interacts with somA.

It localises to the nucleus. Its function is as follows. Transcriptional regulator that forms a complex with somA to control biofilm formation. In Aspergillus fumigatus (strain ATCC MYA-4609 / CBS 101355 / FGSC A1100 / Af293) (Neosartorya fumigata), this protein is Transcriptional activator ptaB.